Consider the following 595-residue polypeptide: NAD-dependent protein deacetylase hst4 (595 aa).

The disordered stretch occupies residues 1–106; sequence MAPRKTKPAT…HLDLTPRLGF (106 aa). Low complexity predominate over residues 9–32; it reads ATKPAAKPTPASTATTSSCPSPKS. The Deacetylase sirtuin-type domain maps to 109 to 428; it reads YGDQEPQLNL…SADVERVKNE (320 aa). NAD(+)-binding positions include 134 to 153 and 222 to 225; these read GAGISTSAGIPDFRSDDGLF and QNID. His253 serves as the catalytic Proton acceptor. 4 residues coordinate Zn(2+): Cys261, Cys264, Cys283, and Cys286. NAD(+) contacts are provided by residues 342 to 344, 373 to 375, and Cys394; these read GTS and NNE. Residues 445–473 show a composition bias toward polar residues; sequence QAQTGMLTPSSSYDGDVENASTTTLSNPA. The disordered stretch occupies residues 445 to 595; sequence QAQTGMLTPS…IPKGMGKLLD (151 aa). 2 stretches are compositionally biased toward basic and acidic residues: residues 478–492 and 530–543; these read KLTEILKASKKDAPK and TPEEKSVKLEEHKA.

Belongs to the sirtuin family. Class I subfamily. It depends on Zn(2+) as a cofactor.

The protein localises to the nucleus. It catalyses the reaction N(6)-acetyl-L-lysyl-[protein] + NAD(+) + H2O = 2''-O-acetyl-ADP-D-ribose + nicotinamide + L-lysyl-[protein]. NAD-dependent histone deacetylase, which could function in telomeric silencing, cell cycle progression and chromosome stability. The sequence is that of NAD-dependent protein deacetylase hst4 from Emericella nidulans (strain FGSC A4 / ATCC 38163 / CBS 112.46 / NRRL 194 / M139) (Aspergillus nidulans).